A 212-amino-acid chain; its full sequence is Thiamine-phosphate synthase (212 aa).

4-amino-2-methyl-5-(diphosphooxymethyl)pyrimidine-binding positions include 39–41 (QLR) and N71. 2 residues coordinate Mg(2+): D72 and D91. Residue S110 participates in 4-amino-2-methyl-5-(diphosphooxymethyl)pyrimidine binding. 136 to 138 (TGT) lines the 2-[(2R,5Z)-2-carboxy-4-methylthiazol-5(2H)-ylidene]ethyl phosphate pocket. K139 provides a ligand contact to 4-amino-2-methyl-5-(diphosphooxymethyl)pyrimidine. 2-[(2R,5Z)-2-carboxy-4-methylthiazol-5(2H)-ylidene]ethyl phosphate-binding positions include G167 and 187–188 (VS).

It belongs to the thiamine-phosphate synthase family. It depends on Mg(2+) as a cofactor.

It catalyses the reaction 2-[(2R,5Z)-2-carboxy-4-methylthiazol-5(2H)-ylidene]ethyl phosphate + 4-amino-2-methyl-5-(diphosphooxymethyl)pyrimidine + 2 H(+) = thiamine phosphate + CO2 + diphosphate. The enzyme catalyses 2-(2-carboxy-4-methylthiazol-5-yl)ethyl phosphate + 4-amino-2-methyl-5-(diphosphooxymethyl)pyrimidine + 2 H(+) = thiamine phosphate + CO2 + diphosphate. The catalysed reaction is 4-methyl-5-(2-phosphooxyethyl)-thiazole + 4-amino-2-methyl-5-(diphosphooxymethyl)pyrimidine + H(+) = thiamine phosphate + diphosphate. It participates in cofactor biosynthesis; thiamine diphosphate biosynthesis; thiamine phosphate from 4-amino-2-methyl-5-diphosphomethylpyrimidine and 4-methyl-5-(2-phosphoethyl)-thiazole: step 1/1. Functionally, condenses 4-methyl-5-(beta-hydroxyethyl)thiazole monophosphate (THZ-P) and 2-methyl-4-amino-5-hydroxymethyl pyrimidine pyrophosphate (HMP-PP) to form thiamine monophosphate (TMP). The protein is Thiamine-phosphate synthase of Azorhizobium caulinodans (strain ATCC 43989 / DSM 5975 / JCM 20966 / LMG 6465 / NBRC 14845 / NCIMB 13405 / ORS 571).